The primary structure comprises 528 residues: MVRALILDLGDVLFNWDAPASTPISRKTLGQMLHSEIWGEYERGHLTEDEAYNALAKRYSCEAKDVAHTFVLARESLRLDTKFKTFLQTLKQNANGSLRVYGMSNISKPDFEVLLGKADDWTLFDKIFPSGHVGMRKPDLAFFRYVLKDISTPVEDVVFVDDNLDNVTSARSLGMRSVLFHKKDEVQRQLTNIFGSPAERGLEYLSANKTNLQSATTTDIPIQDNFGQLLILEATEDPSLVRMEPGKRTWNFFIGSPSLTTDTFPDDLDTTSLALSIVPTSPDVVNSVIDEIISRRDKDGIVPTYFDNTRPRVDPIVCVNVLSMFAKYGREHDLPATVAWVRDVLYHRAYLGGTRYYGSAEAFLFFFTRFVRNLRPGTLKQDLHALLSERVRERLNTPVDALALSMRIQACHALGFDAPADIATLITMQDEDGGWPAAVIYKYGAGGLGITNRGVSTAFAVKAITGSPVKTETNIGGDGARAVSAMSSLEARRLQPISSVGDWVRFIIASLHVHLAWLWNVLLLSKVV.

This sequence belongs to the HAD-like hydrolase superfamily.

The catalysed reaction is (2E,6E)-farnesyl diphosphate + H2O = (5S,9S,10S)-drim-7-en-11-ol + diphosphate. The protein operates within secondary metabolite biosynthesis; terpenoid biosynthesis. In terms of biological role, drimenol cyclase; part of the gene cluster that mediates the biosynthesis of various drimane-type sesquiterpene esters, compounds that exhibit diverse biological activities and are widely present in eukaryotes. The pathway begins with the synthesis of the backbone drimenol by the terpene cyclase drtB using farnesyl pyrophosphate (FPP) as substrate. The cytochrome P450 monooxygenase drtD is then responsible for the hydroxylations at C-6, C-9 and C-12, as well as the oxidation of hydroxyl groups at C-6 and C-11 to a ketone and an aldehyde, respectively. Then, the biosynthesis can go in two directions, either the hydroxylated drimenol is further hydroxylated at C-2 and C-3 by an enzyme(s) not associated with the drt cluster, or the FAD-binding oxidoreductase drtC further oxidizes C-11 or C-12 to form the butyrolactone ring. DrtB, drtD and drtC are solely responsible for the formation of the different drimane structures observed during drimane sesquiterpenes biosynthesis. The polyketide synthase drtA synthesizes different lengths (C6 and C8) of PKS chains, which are then oxidized to varying degrees by the short-chain dehydrogenase drtF. Finally, these PKS chains are transferred onto drimane sesquiterpenes by the acyltransferase drtE, forming the sesquiterpene esters. In addition to the different fatty acyl-CoA chains produced by drtA, drtE is also able to use cinnamoyl-CoA as a substrate. This chain is Drimenol cyclase drtB, found in Aspergillus calidoustus.